A 97-amino-acid chain; its full sequence is UPF0213 protein YE0453 (97 aa).

The GIY-YIG domain occupies 4–79; that stretch reads SLWHLYLLRT…KQLSKQQKEK (76 aa).

Belongs to the UPF0213 family.

The chain is UPF0213 protein YE0453 from Yersinia enterocolitica serotype O:8 / biotype 1B (strain NCTC 13174 / 8081).